A 202-amino-acid polypeptide reads, in one-letter code: Protein phosphatase inhibitor 2 family member C (202 aa).

Disordered regions lie at residues 1 to 51 (MSAS…DESS) and 71 to 118 (PGTS…EQES). Positions 12-17 (KGILKN) are required for binding PPP1CC. Over residues 19-35 (SSSGSSVATSGQQSGGT) the composition is skewed to low complexity. A required for binding PPP1CC region spans residues 43-55 (KSQKWDESSILAA). Residues 71–80 (PGTSYMSVQD) are compositionally biased toward polar residues. Basic and acidic residues predominate over residues 84–112 (DSVRDVEGEDSVRGVEGKEATDASDHSCE). The segment at 144–147 (HYNE) is required for binding PPP1CC catalytic center, displacing metal ions and inhibition of PPP1CC catalytic activity. A disordered region spans residues 162 to 202 (LQSEDNENEETPQGTNEEKTAAEESEEAPLTGGLQTQSCDP).

Belongs to the protein phosphatase inhibitor 2 family. In terms of tissue distribution, detected in sperm (at protein level).

Functions as a protein phosphatase inhibitor. It inhibits activity of the catalytic subunit of PP1 and weakly inhibits the activity of myosin-associated phosphates. This chain is Protein phosphatase inhibitor 2 family member C, found in Homo sapiens (Human).